Here is a 277-residue protein sequence, read N- to C-terminus: Formamidopyrimidine-DNA glycosylase (277 aa).

P2 (schiff-base intermediate with DNA) is an active-site residue. E3 serves as the catalytic Proton donor. Residue K59 is the Proton donor; for beta-elimination activity of the active site. H96, R115, and R158 together coordinate DNA. The FPG-type zinc finger occupies 243–277; sequence WVYGRGGNPCRRCGGEILREKRAGRSTHFCPRCQK. The active-site Proton donor; for delta-elimination activity is the R267.

Belongs to the FPG family. Monomer. Requires Zn(2+) as cofactor.

It catalyses the reaction Hydrolysis of DNA containing ring-opened 7-methylguanine residues, releasing 2,6-diamino-4-hydroxy-5-(N-methyl)formamidopyrimidine.. It carries out the reaction 2'-deoxyribonucleotide-(2'-deoxyribose 5'-phosphate)-2'-deoxyribonucleotide-DNA = a 3'-end 2'-deoxyribonucleotide-(2,3-dehydro-2,3-deoxyribose 5'-phosphate)-DNA + a 5'-end 5'-phospho-2'-deoxyribonucleoside-DNA + H(+). Functionally, involved in base excision repair of DNA damaged by oxidation or by mutagenic agents. Acts as a DNA glycosylase that recognizes and removes damaged bases. Has a preference for oxidized purines, such as 7,8-dihydro-8-oxoguanine (8-oxoG). Has AP (apurinic/apyrimidinic) lyase activity and introduces nicks in the DNA strand. Cleaves the DNA backbone by beta-delta elimination to generate a single-strand break at the site of the removed base with both 3'- and 5'-phosphates. In Heliobacterium modesticaldum (strain ATCC 51547 / Ice1), this protein is Formamidopyrimidine-DNA glycosylase.